The chain runs to 470 residues: Arginine ADP-riboxanase OspC1 (470 aa).

His138, Gln139, Ser140, Leu144, Ile157, Asn167, Phe183, His201, Phe206, Asp226, and Glu320 together coordinate NAD(+). The active site involves Glu320. ANK repeat units lie at residues 363–392 (IALQ…ITRQ), 399–431 (HELY…DVNT), and 438–467 (SGDC…TSDN).

It belongs to the OspC family. Interacts with host calmodulin (CALM1, CALM2 and/or CALM3); specifically interacts with the apo form of calmodulin, preventing calcium-binding.

It is found in the secreted. The protein localises to the host nucleus. The catalysed reaction is L-arginyl-[protein] + NAD(+) = ADP-riboxanated L-argininyl-[protein] + nicotinamide + NH4(+) + H(+). Its function is as follows. ADP-riboxanase effector that mediates arginine ADP-riboxanation of host caspases. ADP-riboxanation of host apoptotic caspases (CASP3, CASP8 and CASP9) prevents their activation, thereby inhibiting host cell extrinsic and intrinsic apoptosis. Does not catalyze ADP-riboxanation of host CASP4/CASP11. Independently of its ADP-riboxanase activity, acts as an inhibitor of calcium signaling by inhibiting host calmodulin, preventing activation of the JAK-STAT signaling pathway in response to interferon-beta. Mechanistically, acts by binding to the apo form of calmodulin, preventing calcium-binding and ability to activate host CaMK2 (CAMKII), which is required to stimulate the JAK-STAT signaling pathway in response to interferon-beta. The sequence is that of Arginine ADP-riboxanase OspC1 from Shigella flexneri.